A 144-amino-acid polypeptide reads, in one-letter code: MPLERTLSIIKPDAVGKHLTGRILARFERAGLQPVAIKMVRLTSEQAEAFYAEHKGREFYQPLIDFMTSGPMVVQVLQAENAINLYREMIGKTDPTQAAAGTIRADFAESTRCNAVHGSDSPASAAKEIAFFFSDDEICPPAAD.

Lys-11, Phe-59, Arg-87, Thr-93, Arg-104, and Asn-114 together coordinate ATP. Catalysis depends on His-117, which acts as the Pros-phosphohistidine intermediate.

Belongs to the NDK family. As to quaternary structure, homotetramer. Mg(2+) is required as a cofactor.

Its subcellular location is the cytoplasm. It catalyses the reaction a 2'-deoxyribonucleoside 5'-diphosphate + ATP = a 2'-deoxyribonucleoside 5'-triphosphate + ADP. It carries out the reaction a ribonucleoside 5'-diphosphate + ATP = a ribonucleoside 5'-triphosphate + ADP. In terms of biological role, major role in the synthesis of nucleoside triphosphates other than ATP. The ATP gamma phosphate is transferred to the NDP beta phosphate via a ping-pong mechanism, using a phosphorylated active-site intermediate. This chain is Nucleoside diphosphate kinase, found in Psychromonas ingrahamii (strain DSM 17664 / CCUG 51855 / 37).